The sequence spans 247 residues: Phosphate import ATP-binding protein PstB (247 aa).

Positions 2-242 (CRDVNVYYGE…PRHPLTEDYI (241 aa)) constitute an ABC transporter domain. 32–39 (GPSGCGKS) contributes to the ATP binding site.

It belongs to the ABC transporter superfamily. Phosphate importer (TC 3.A.1.7) family. As to quaternary structure, the complex is composed of two ATP-binding proteins (PstB), two transmembrane proteins (PstC and PstA) and a solute-binding protein (PstS).

It is found in the cell inner membrane. The catalysed reaction is phosphate(out) + ATP + H2O = ADP + 2 phosphate(in) + H(+). Its function is as follows. Part of the ABC transporter complex PstSACB involved in phosphate import. Responsible for energy coupling to the transport system. The polypeptide is Phosphate import ATP-binding protein PstB (Methylococcus capsulatus (strain ATCC 33009 / NCIMB 11132 / Bath)).